The chain runs to 231 residues: Cuticle protein LPCP-23 (231 aa).

An N-terminal signal peptide occupies residues 1–17; that stretch reads MAFKFVVFAAALAYANA. Repeat copies occupy residues 130–133 and 199–202.

Component of the cuticle of Tenebrio molitor. In Tenebrio molitor (Yellow mealworm beetle), this protein is Cuticle protein LPCP-23 (LPCP-23).